The chain runs to 416 residues: Lactose permease (416 aa).

Residues Met1–Asn13 lie on the Cytoplasmic side of the membrane. Residues Phe14–Phe34 traverse the membrane as a helical segment. Residues Phe35–Thr50 are Periplasmic-facing. A helical membrane pass occupies residues Gly51–Ile71. The Cytoplasmic portion of the chain corresponds to Ser72 to His80. Residues Leu81–Ser101 form a helical membrane-spanning segment. Residue Pro102 is a topological domain, periplasmic. A helical transmembrane segment spans residues Leu103 to Phe123. The Cytoplasmic segment spans residues Ser124–Arg149. A run of 2 helical transmembrane segments spans residues Val150 to Asp170 and Pro171 to Val191. The Cytoplasmic portion of the chain corresponds to Ser192–Arg223. A helical transmembrane segment spans residues Met224 to Phe244. Residues Asp245–Gly267 lie on the Periplasmic side of the membrane. The helical transmembrane segment at Phe268–Ile288 threads the bilayer. The Cytoplasmic portion of the chain corresponds to Asn289 to Asn295. The next 2 membrane-spanning stretches (helical) occupy residues Ala296 to Ser316 and Ala317 to Gly337. Over Thr338–Thr353 the chain is Cytoplasmic. Residues Leu354–Val374 form a helical membrane-spanning segment. Residues Gly375–His384 are Periplasmic-facing. Residues Gln385–Leu405 traverse the membrane as a helical segment. Over Lys406–Ala416 the chain is Cytoplasmic.

This sequence belongs to the major facilitator superfamily. Oligosaccharide:H(+) symporter (OHS) (TC 2.A.1.5) family.

It is found in the cell inner membrane. It carries out the reaction lactose(in) + H(+)(in) = lactose(out) + H(+)(out). Functionally, responsible for transport of beta-galactosides into the cell, with the concomitant import of a proton (symport system). This Klebsiella oxytoca protein is Lactose permease (lacY).